Reading from the N-terminus, the 52-residue chain is MYKIIIPAILAIFALWILLQISLEMSIVKNPMNYFIVFIIFFLFVKMVKEKQ.

2 consecutive transmembrane segments (helical) span residues 4–24 (IIIPAILAIFALWILLQISLE) and 25–45 (MSIVKNPMNYFIVFIIFFLFV).

The protein localises to the cell membrane. This is an uncharacterized protein from Bacillus subtilis (strain 168).